The chain runs to 1162 residues: Protein OBERON 4 (1162 aa).

Composition is skewed to basic and acidic residues over residues 1 to 19 (MKRL…KNVD), 61 to 77 (NRDL…HRSE), 90 to 99 (FRSERERPNR), and 118 to 134 (VDDR…DRSL). Disordered stretches follow at residues 1-235 (MKRL…PSCS), 251-307 (IGKS…VSQN), 321-346 (DHRD…DKDE), and 441-485 (SKTE…QSGV). Residues 135 to 146 (KSPSWSRDSPNE) are compositionally biased toward polar residues. Residues 148-157 (SKFKPLDSRN) are compositionally biased toward basic and acidic residues. Polar residues predominate over residues 163–182 (KSLASPTWSKDSGSEQSKSV). The span at 203-213 (EMEEGELEPEP) shows a compositional bias: acidic residues. Composition is skewed to basic and acidic residues over residues 225–235 (TKHDCKLPSCS), 263–300 (SNRE…HATE), 336–346 (DTVDEKGDKDE), and 441–457 (SKTE…KDDN). Residues 835 to 899 (ACMCLVCSNF…QFHCVACNHP (65 aa)) form a PHD-type zinc finger. Residues 1065–1161 (MKQAEAEMFQ…KMEMTKQSLA (97 aa)) are a coiled coil.

In terms of assembly, self-interacts. Interacts with OBE1 and OBE2. Interacts with OBE3.

Its subcellular location is the nucleus. Probable transcription factor that functions redundantly with OBE3 in specification of the hypophysis and establishment of the embryonic root. Involved in the activation of ARF5/MP-dependent gene expression during embryonic root meristem initiation. Involved in shoot meristem homeostasis. The sequence is that of Protein OBERON 4 from Arabidopsis thaliana (Mouse-ear cress).